We begin with the raw amino-acid sequence, 378 residues long: MAIISSRDTGQNAEGPKRRQQKSSAWRKEGRELSFAGERGADPSALLQPQAHPGEAQEESLRPRTLAEYIGQTELKEVLSIAIAAARARQEPLDHLLFYGPPGLGKTTVAAVLAAEMGSQFYMTTAPALESPRDIAGYLVRLKRGDVLFIDEIHRLPKVTEELLYPAMEDFRLDITIGKGRSARITSLPLERFTLIGATTRIGALTSPLRDRFGHVQRLRFYEPHELVQIVLRTARLLNVSTDPEGAAEIARRSRGTPRIANRLFKRVRDYAQVRGDGHISQEVAAAALELFQVDPMGLDWIDRKLLTVLVEQFGGGPVGLETMAAVTGEDPQTIEEVYEPYLLQIGYLQRTPRGRVVTPAALRHLGYEAQSPLPLWS.

Residues 1–12 are compositionally biased toward polar residues; the sequence is MAIISSRDTGQN. The tract at residues 1-62 is disordered; that stretch reads MAIISSRDTG…PGEAQEESLR (62 aa). Residues 13–222 are large ATPase domain (RuvB-L); that stretch reads AEGPKRRQQK…FGHVQRLRFY (210 aa). Residues Leu-61, Arg-62, Gly-103, Lys-106, Thr-107, Thr-108, 169-171, Arg-212, Tyr-222, and Arg-259 contribute to the ATP site; that span reads EDF. Thr-107 is a binding site for Mg(2+). The segment at 223–293 is small ATPAse domain (RuvB-S); sequence EPHELVQIVL…VAAAALELFQ (71 aa). Positions 296-378 are head domain (RuvB-H); it reads PMGLDWIDRK…EAQSPLPLWS (83 aa). Residues Arg-351 and Arg-356 each contribute to the DNA site.

The protein belongs to the RuvB family. In terms of assembly, homohexamer. Forms an RuvA(8)-RuvB(12)-Holliday junction (HJ) complex. HJ DNA is sandwiched between 2 RuvA tetramers; dsDNA enters through RuvA and exits via RuvB. An RuvB hexamer assembles on each DNA strand where it exits the tetramer. Each RuvB hexamer is contacted by two RuvA subunits (via domain III) on 2 adjacent RuvB subunits; this complex drives branch migration. In the full resolvosome a probable DNA-RuvA(4)-RuvB(12)-RuvC(2) complex forms which resolves the HJ.

It localises to the cytoplasm. The enzyme catalyses ATP + H2O = ADP + phosphate + H(+). Its function is as follows. The RuvA-RuvB-RuvC complex processes Holliday junction (HJ) DNA during genetic recombination and DNA repair, while the RuvA-RuvB complex plays an important role in the rescue of blocked DNA replication forks via replication fork reversal (RFR). RuvA specifically binds to HJ cruciform DNA, conferring on it an open structure. The RuvB hexamer acts as an ATP-dependent pump, pulling dsDNA into and through the RuvAB complex. RuvB forms 2 homohexamers on either side of HJ DNA bound by 1 or 2 RuvA tetramers; 4 subunits per hexamer contact DNA at a time. Coordinated motions by a converter formed by DNA-disengaged RuvB subunits stimulates ATP hydrolysis and nucleotide exchange. Immobilization of the converter enables RuvB to convert the ATP-contained energy into a lever motion, pulling 2 nucleotides of DNA out of the RuvA tetramer per ATP hydrolyzed, thus driving DNA branch migration. The RuvB motors rotate together with the DNA substrate, which together with the progressing nucleotide cycle form the mechanistic basis for DNA recombination by continuous HJ branch migration. Branch migration allows RuvC to scan DNA until it finds its consensus sequence, where it cleaves and resolves cruciform DNA. The sequence is that of Holliday junction branch migration complex subunit RuvB 1 from Synechococcus sp. (strain JA-3-3Ab) (Cyanobacteria bacterium Yellowstone A-Prime).